Consider the following 193-residue polypeptide: Bifunctional protein PyrR (193 aa).

Residues 57–58, arginine 98, 119–127, arginine 152, and valine 176 each bind substrate; these read TR and DDVLYSGRS. The PRPP-binding motif lies at 115–127; it reads VILVDDVLYSGRS.

This sequence belongs to the purine/pyrimidine phosphoribosyltransferase family. PyrR subfamily.

It carries out the reaction UMP + diphosphate = 5-phospho-alpha-D-ribose 1-diphosphate + uracil. In terms of biological role, regulates the transcription of the pyrimidine nucleotide (pyr) operon in response to exogenous pyrimidines. Its function is as follows. Also displays a weak uracil phosphoribosyltransferase activity which is not physiologically significant. In Mycobacterium bovis (strain ATCC BAA-935 / AF2122/97), this protein is Bifunctional protein PyrR.